Here is a 308-residue protein sequence, read N- to C-terminus: Protein translocase subunit SecF (308 aa).

A run of 6 helical transmembrane segments spans residues 12-32 (YFIFSTFMILFSLFSIFTKGF), 127-147 (AKNALWALALGSILILIYITI), 152-172 (IYALSSVLALLHDVLVTIGFI), 182-202 (PFIAAILTILGYSMNDTIVIF), 234-254 (VYTSLTTLLALAALLIFGGST), and 262-282 (LLVGIVYGTYSSIWLASPLVY).

Belongs to the SecD/SecF family. SecF subfamily. In terms of assembly, forms a complex with SecD. Part of the essential Sec protein translocation apparatus which comprises SecA, SecYEG and auxiliary proteins SecDF. Other proteins may also be involved.

It is found in the cell inner membrane. Functionally, part of the Sec protein translocase complex. Interacts with the SecYEG preprotein conducting channel. SecDF uses the proton motive force (PMF) to complete protein translocation after the ATP-dependent function of SecA. The sequence is that of Protein translocase subunit SecF from Sebaldella termitidis (strain ATCC 33386 / NCTC 11300).